Reading from the N-terminus, the 747-residue chain is Flowering time control protein FCA (747 aa).

The disordered stretch occupies residues 80–101; the sequence is YSVRPTTPPVQQPLSGQKRGYP. 2 RRM domains span residues 120 to 201 and 211 to 291; these read VKLF…YADG and FKLF…FAEP. Positions 291–301 are enriched in basic and acidic residues; that stretch reads PKRPKPGESRE. The tract at residues 291–503 is disordered; it reads PKRPKPGESR…QQPLQKMQHP (213 aa). 2 stretches are compositionally biased toward polar residues: residues 320 to 353 and 395 to 406; these read RPTS…SNTG and SSSATLQQQNRA. Residues 448-460 are compositionally biased toward low complexity; it reads SSQLPTSQLPPQQ. Positions 461 to 498 are enriched in polar residues; the sequence is NISRATAPQTPLNINLRPTTVSSATVQFPPRSQQQPLQ. Residues 591–624 form the WW domain; that stretch reads GSVKCTWTEHTSPDGFKYYYNGLTGESKWEKPEE. The span at 630-641 shows a compositional bias: basic and acidic residues; it reads REQQKQQQHQEK. 2 disordered regions span residues 630–707 and 722–747; these read REQQ…SGIG and AASM…KNKA. The span at 642-673 shows a compositional bias: low complexity; it reads PTIQQSQTQLQPLQQQPQQVQQQYQGQQLQQP. 2 stretches are compositionally biased toward polar residues: residues 674-707 and 726-739; these read FYSS…SGIG and NDIS…QSPQ.

In terms of assembly, interacts (via C-terminus) with SWI3B and (via WW domain) with FY (via PPLPP motifs). As to expression, constitutively expressed, but the negative feedback maintains the active isoform a low level throughout much of the plant, except in meristematic cells at a specific time in development.

Its subcellular location is the nucleus. Plays a major role in the promotion of the transition of the vegetative meristem to reproductive development. Plays a role in the regulation of flowering time in the autonomous flowering pathway by decreasing FLOWERING LOCUS C mRNA levels. Required for RNA-mediated chromatin silencing of a range of loci in the genome. Cotranscriptionally recognizes aberrant RNA and marks it for silencing. Controls alternative cleavage and polyadenylation on pre-mRNAs and antisense RNAs. Acts redundantly with FPA to prevent the expression of distally polyadenylated antisense RNAs at the FLC locus. This chain is Flowering time control protein FCA (FCA), found in Arabidopsis thaliana (Mouse-ear cress).